A 300-amino-acid polypeptide reads, in one-letter code: Meiotically up-regulated gene 165 protein (300 aa).

2 disordered regions span residues 1–38 and 50–109; these read MLEK…HKPS and TNSS…STLE. Over residues 21–38 the composition is skewed to polar residues; sequence ESHTFSSQTDDSYFHKPS. A compositionally biased stretch (low complexity) spans 52 to 69; sequence SSVPSASRSPESIASSQS. A compositionally biased stretch (basic residues) spans 94–103; it reads TLRKRGRKPK.

It is found in the nucleus. Functionally, has a role in meiosis. This chain is Meiotically up-regulated gene 165 protein (mug165), found in Schizosaccharomyces pombe (strain 972 / ATCC 24843) (Fission yeast).